Here is a 73-residue protein sequence, read N- to C-terminus: uncharacterized protein (73 aa).

Residues 54–72 (VSFIVAPTVMQVQCLFFFI) form a helical membrane-spanning segment.

It is found in the membrane. This is an uncharacterized protein from Saccharomyces cerevisiae (strain ATCC 204508 / S288c) (Baker's yeast).